Here is a 46-residue protein sequence, read N- to C-terminus: Protein PsbN (46 aa).

Residues 10–30 (LIITILAVTIAFTAVSLYTAF) traverse the membrane as a helical segment.

Belongs to the PsbN family.

It localises to the cellular thylakoid membrane. Its function is as follows. May play a role in photosystem I and II biogenesis. The chain is Protein PsbN from Acaryochloris marina (strain MBIC 11017).